The chain runs to 1481 residues: Cystic fibrosis transmembrane conductance regulator (1481 aa).

Residues 1–77 (MQRSPLEKAS…KLINALRRCF (77 aa)) lie on the Cytoplasmic side of the membrane. Residues 78-98 (FWRFMFYGILLYLGEVTKAVQ) traverse the membrane as a helical segment. The 285-residue stretch at 81–365 (FMFYGILLYL…WAVQTWYDSL (285 aa)) folds into the ABC transmembrane type-1 1 domain. Over 99 to 122 (PLLLGRIIASYDPDNKEERSIAIY) the chain is Extracellular. The helical transmembrane segment at 123–146 (LGIGLCLLFIVRTLLLHPAIFGLH) threads the bilayer. At 147-195 (HIGMQMRIAMFSLIYKKTLKLSSRVLDKISIGQLVSLLSNNLNKFDEGL) the chain is on the cytoplasmic side. Residues 196–216 (ALAHFVWIVPLQVALLMGLIW) form a helical membrane-spanning segment. Topologically, residues 217 to 222 (ELLQAS) are extracellular. A helical membrane pass occupies residues 223–243 (AFCGLGFLIVLALFQAGLGRM). At 244–298 (MMKYRDQRAGKINERLVITSEMIENIQSVKAYCWEEAMEKMIENLRQTELKLTRK) the chain is on the cytoplasmic side. The helical transmembrane segment at 299-319 (AAYVRYFNSSAFFFSGFFVVF) threads the bilayer. Residues 320-339 (LSVLPYALIKGIVLRKIFTT) lie on the Extracellular side of the membrane. The helical transmembrane segment at 340 to 358 (ISFCIVLRMAVTRQFPWAV) threads the bilayer. Topologically, residues 359 to 858 (QTWYDSLGAI…YLRYITVHKS (500 aa)) are cytoplasmic. Residues Trp401, Ser434, 458 to 465 (GSTGAGKT), and Gln493 each bind ATP. The region spanning 423-646 (NDDDSLFFSN…RPDFSSKLMG (224 aa)) is the ABC transporter 1 domain. Cys524 is lipidated: S-palmitoyl cysteine. Residues Ser549 and Ser660 each carry the phosphoserine modification. Residues 654–831 (SAERRNSILT…EEINEEDLKE (178 aa)) are disordered R region. Residue Ser670 is modified to Phosphoserine; by PKA. Ser686 is subject to Phosphoserine. A Glycyl lysine isopeptide (Lys-Gly) (interchain with G-Cter in ubiquitin) cross-link involves residue Lys688. 2 positions are modified to phosphoserine: Ser700 and Ser712. The residue at position 717 (Thr717) is a Phosphothreonine. Ser737, Ser753, Ser768, Ser790, Ser795, and Ser813 each carry phosphoserine. The chain crosses the membrane as a helical span at residues 859-879 (LIFVLIWCLVIFLAEVAASLV). The region spanning 859 to 1155 (LIFVLIWCLV…AVNSSIDVDS (297 aa)) is the ABC transmembrane type-1 2 domain. At 880-918 (VLWFLGNTPPQDKGNSTYSRNNSYAVIITRTSSYYVFYI) the chain is on the extracellular side. N-linked (GlcNAc...) asparagine glycosylation is found at Asn894 and Asn900. Residues 919-939 (YVGVADTLLAMGFFRGLPLVH) form a discontinuously helical membrane-spanning segment. Over 940–990 (TLITVSKILHHKMLHSVLQAPMSTLNTLKAGGILNRFSKDIAILDDLLPLT) the chain is Cytoplasmic. Residues 991–1011 (IFDFIQLLLIVIGAIAVVAVL) form a helical membrane-spanning segment. At 1012 to 1013 (QP) the chain is on the extracellular side. A helical membrane pass occupies residues 1014–1034 (YIFVATVPVIVAFIMLRAYFL). At 1035 to 1095 (QTSQQLKQLE…TANWFLYLST (61 aa)) the chain is on the cytoplasmic side. The helical transmembrane segment at 1096–1116 (LRWFQMRIEMIFVIFFIAVTF) threads the bilayer. The Extracellular segment spans residues 1117–1130 (ISILTTGEGEGTVG). Residues 1131-1151 (IILTLAMNIMSTLQWAVNSSI) traverse the membrane as a helical segment. The Cytoplasmic segment spans residues 1152–1481 (DVDSLMRSVS…TEEEVQDTRL (330 aa)). In terms of domain architecture, ABC transporter 2 spans 1211-1444 (MTVKDLTAKY…RSLFRQAISP (234 aa)). Residues Tyr1220 and 1245–1252 (GRTGSGKS) each bind ATP. The interaction with GORASP2 stretch occupies residues 1387-1481 (RTLKQAFADC…TEEEVQDTRL (95 aa)). A lipid anchor (S-palmitoyl cysteine) is attached at Cys1396. 2 positions are modified to phosphoserine: Ser1445 and Ser1457. The short motif at 1479–1481 (TRL) is the PDZ-binding element.

This sequence belongs to the ABC transporter superfamily. ABCC family. CFTR transporter (TC 3.A.1.202) subfamily. Monomer; does not require oligomerization for channel activity. May form oligomers in the membrane. Interacts with SLC26A3, SLC26A6 and NHERF1. Interacts with SHANK2. Interacts with MYO6. Interacts (via C-terminus) with GOPC (via PDZ domain); this promotes CFTR internalization and thereby decreases channel activity. Interacts with SLC4A7 through NHERF1. Found in a complex with MYO5B and RAB11A. Interacts with ANO1. Interacts with SLC26A8. Interacts with AHCYL1; the interaction increases CFTR activity. Interacts with CSE1L. The core-glycosylated form interacts with GORASP2 (via PDZ GRASP-type 1 domain) in respone to ER stress. Interacts with MARCHF2; the interaction leads to CFTR ubiqtuitination and degradation. Interacts with ADGRG2. Post-translationally, N-glycosylated. Phosphorylated; cAMP treatment promotes phosphorylation and activates the channel. Dephosphorylation decreases the ATPase activity (in vitro). Phosphorylation at PKA sites activates the channel. Phosphorylation at PKC sites enhances the response to phosphorylation by PKA. Phosphorylated by AMPK; this inhibits channel activity. In terms of processing, ubiquitinated, leading to its degradation in the lysosome. Deubiquitination by USP10 in early endosomes enhances its endocytic recycling to the cell membrane. Ubiquitinated by RNF185 during ER stress. Ubiquitinated by MARCHF2.

The protein localises to the apical cell membrane. It is found in the early endosome membrane. Its subcellular location is the cell membrane. The protein resides in the recycling endosome membrane. It localises to the endoplasmic reticulum membrane. The protein localises to the nucleus. The enzyme catalyses ATP + H2O + closed Cl(-) channel = ADP + phosphate + open Cl(-) channel.. It carries out the reaction chloride(in) = chloride(out). The catalysed reaction is hydrogencarbonate(in) = hydrogencarbonate(out). It catalyses the reaction ATP + H2O = ADP + phosphate + H(+). Its function is as follows. Epithelial ion channel that plays an important role in the regulation of epithelial ion and water transport and fluid homeostasis. Mediates the transport of chloride ions across the cell membrane. Possesses an intrinsic ATPase activity and utilizes ATP to gate its channel; the passive flow of anions through the channel is gated by cycles of ATP binding and hydrolysis by the ATP-binding domains. The ion channel is also permeable to HCO(3)(-); selectivity depends on the extracellular chloride concentration. Exerts its function also by modulating the activity of other ion channels and transporters. Contributes to the regulation of the pH and the ion content of the epithelial fluid layer. Modulates the activity of the epithelial sodium channel (ENaC) complex, in part by regulating the cell surface expression of the ENaC complex. May regulate bicarbonate secretion and salvage in epithelial cells by regulating the transporter SLC4A7. Can inhibit the chloride channel activity of ANO1. Plays a role in the chloride and bicarbonate homeostasis during sperm epididymal maturation and capacitation. In Macaca fascicularis (Crab-eating macaque), this protein is Cystic fibrosis transmembrane conductance regulator.